A 505-amino-acid polypeptide reads, in one-letter code: ATP synthase subunit beta, mitochondrial (505 aa).

Residues 1-31 (MFALRAASKADKNLLPFLGQLSRSHAAKAAK) constitute a mitochondrion transit peptide. 183–190 (GGAGVGKT) contributes to the ATP binding site.

It belongs to the ATPase alpha/beta chains family. F-type ATPases have 2 components, CF(1) - the catalytic core - and CF(0) - the membrane proton channel. CF(1) has five subunits: alpha(3), beta(3), gamma(1), delta(1), epsilon(1). CF(0) has three main subunits: a, b and c.

It is found in the mitochondrion. It localises to the mitochondrion inner membrane. It carries out the reaction ATP + H2O + 4 H(+)(in) = ADP + phosphate + 5 H(+)(out). Its function is as follows. Mitochondrial membrane ATP synthase (F(1)F(0) ATP synthase or Complex V) produces ATP from ADP in the presence of a proton gradient across the membrane which is generated by electron transport complexes of the respiratory chain. F-type ATPases consist of two structural domains, F(1) - containing the extramembraneous catalytic core, and F(0) - containing the membrane proton channel, linked together by a central stalk and a peripheral stalk. During catalysis, ATP synthesis in the catalytic domain of F(1) is coupled via a rotary mechanism of the central stalk subunits to proton translocation. Subunits alpha and beta form the catalytic core in F(1). Rotation of the central stalk against the surrounding alpha(3)beta(3) subunits leads to hydrolysis of ATP in three separate catalytic sites on the beta subunits. The chain is ATP synthase subunit beta, mitochondrial from Drosophila melanogaster (Fruit fly).